Here is a 474-residue protein sequence, read N- to C-terminus: Bifunctional protein HldE (474 aa).

The tract at residues 1–318 is ribokinase; it reads MKLSMPRFDQ…RAIQREEGSE (318 aa). Position 194–197 (194–197) interacts with ATP; the sequence is NLSE. D263 is a catalytic residue. The interval 343-474 is cytidylyltransferase; that stretch reads FTNGCFDILH…AIVEKIRKSE (132 aa).

The protein in the N-terminal section; belongs to the carbohydrate kinase PfkB family. In the C-terminal section; belongs to the cytidylyltransferase family. In terms of assembly, homodimer.

The enzyme catalyses D-glycero-beta-D-manno-heptose 7-phosphate + ATP = D-glycero-beta-D-manno-heptose 1,7-bisphosphate + ADP + H(+). It carries out the reaction D-glycero-beta-D-manno-heptose 1-phosphate + ATP + H(+) = ADP-D-glycero-beta-D-manno-heptose + diphosphate. It functions in the pathway nucleotide-sugar biosynthesis; ADP-L-glycero-beta-D-manno-heptose biosynthesis; ADP-L-glycero-beta-D-manno-heptose from D-glycero-beta-D-manno-heptose 7-phosphate: step 1/4. It participates in nucleotide-sugar biosynthesis; ADP-L-glycero-beta-D-manno-heptose biosynthesis; ADP-L-glycero-beta-D-manno-heptose from D-glycero-beta-D-manno-heptose 7-phosphate: step 3/4. In terms of biological role, catalyzes the phosphorylation of D-glycero-D-manno-heptose 7-phosphate at the C-1 position to selectively form D-glycero-beta-D-manno-heptose-1,7-bisphosphate. Its function is as follows. Catalyzes the ADP transfer from ATP to D-glycero-beta-D-manno-heptose 1-phosphate, yielding ADP-D-glycero-beta-D-manno-heptose. This Pseudomonas fluorescens (strain Pf0-1) protein is Bifunctional protein HldE.